Consider the following 684-residue polypeptide: MKQERRRKRQPGPPRLELVVAHPREEEMAGLDGGGDAEEGATHARGGGGAPPPWREQLTARGLVASLAVGAMYSVIVMKLNLTTGLVPTLNVSAALIAFVVLRGWTQALARLGFAARPFTRQENTVVQTCAVACYSIAVGGGFGSYLLGLNKRTYEMAGEDTEGNVPGSYKEPGIAWMTGFLLAVSFVGLLALVPLRKVMIIDYKLTYPSGTATAVLINGFHTPHGDAMAKQQVNGFTKYFAMSFFWSFFQWFYSGGDNCGFSQFPTFGLKAWQQTFFFDFSLTYVGAGMICSHLVNLSLLLGAILSWGVMWPLISDLKGDWYSADIPESSMKSLQGYKAFICVALILGDGLYNFVKIVALTIKNLFDSSKLKNAKKGEDMPVLDELHRNEVFTTDNIPSWLAFSGYLGLTFIAVIAIPMMFHEMKWYYVVIAYLLAPALGFCNAYGAGLTDINMAYNYGKIALFILAAWAGKDSGVVAGLVGCGLVKSLVSISADLMHDFKTGHLTLTSPRSMIIAQAIGTVMGCVISPLTFFLFYSAFDIGNPEGYWKAPYALVYRNMAILGVEGFSALPQHCLQLCYGFFGFAVAANLTRDLCPPKYGRWVPLPMAMGVPFLVGASFAIDMCIGSLIVFTWHIIDKSKAALMVPAVASGLICGDGLWIFPASLLALAKISPPMCMAFRSTN.

Residues 1–10 are compositionally biased toward basic residues; it reads MKQERRRKRQ. Residues 1–55 form a disordered region; sequence MKQERRRKRQPGPPRLELVVAHPREEEMAGLDGGGDAEEGATHARGGGGAPPPWR. A run of 14 helical transmembrane segments spans residues 58–78, 82–102, 130–150, 174–194, 234–254, 295–315, 341–361, 402–422, 430–450, 462–482, 515–535, 568–588, 612–632, and 642–662; these read LTAR…VIVM, LTTG…FVVL, CAVA…LLGL, GIAW…LALV, VNGF…QWFY, LVNL…WPLI, FICV…IVAL, LAFS…PMMF, VVIA…GAGL, IALF…AGLV, IIAQ…TFFL, FSAL…FAVA, VPFL…LIVF, and AALM…LWIF.

Belongs to the YSL (TC 2.A.67.2) family.

The protein localises to the membrane. Functionally, may be involved in the transport of nicotianamine-chelated metals. The chain is Probable metal-nicotianamine transporter YSL9 (YSL9) from Oryza sativa subsp. japonica (Rice).